A 131-amino-acid chain; its full sequence is Transcriptional activator protein (131 aa).

Residues 13–28 carry the Nuclear localization signal motif; that stretch reads KAQHRIAKKRAVRRRR. The segment at 33-52 is a zinc-finger region; the sequence is CGCSIYIHINCAKDGNGFTH. The segment at 78 to 131 is disordered; sequence DVQXGGSTLHAHKDIPHTNPVQPQPEESTKSSQSVPELPSLDGIDSSFWDDIFE. The transactivation stretch occupies residues 117-131; sequence SLDGIDSSFWDDIFE.

This sequence belongs to the geminiviridae transcriptional activator protein family. In terms of assembly, monomer. Homodimer. Homooligomer. Self-interaction correlates with nuclear localization and efficient activation of transcription. Monomers suppress local silencing by interacting with and inactivating host adenosine kinase 2 (ADK2) in the cytoplasm. Interacts with and inhibits host SNF1 kinase. Binds to ssDNA. Phosphorylated.

It localises to the host nucleus. It is found in the host cytoplasm. Strong activator of the late viral genes promoters. Enhances the expression of the capsid protein and nuclear shuttle protein. Acts as a suppressor of RNA-mediated gene silencing, also known as post-transcriptional gene silencing (PTGS), a mechanism of plant viral defense that limits the accumulation of viral RNAs. Suppresses the host RNA silencing by inhibiting adenosine kinase 2 (ADK2), a kinase involved in a general methylation pathway. Also suppresses the host basal defense by interacting with and inhibiting SNF1 kinase, a key regulator of cell metabolism implicated in innate antiviral defense. Determines pathogenicity. In Cucurbita moschata (Winter crookneck squash), this protein is Transcriptional activator protein.